The primary structure comprises 201 residues: Coiled-coil domain-containing protein 195 (201 aa).

The stretch at 4–38 forms a coiled coil; that stretch reads DIQLMRLIQEMRAEIHKLEKENQALRMKLTASSQR. Disordered regions lie at residues 28 to 72 and 179 to 201; these read LRMK…DAAP and SKNSSSLKHSPNQATNQLSIIAE. A compositionally biased stretch (low complexity) spans 179–188; the sequence is SKNSSSLKHS. Positions 189–201 are enriched in polar residues; that stretch reads PNQATNQLSIIAE.

This chain is Coiled-coil domain-containing protein 195, found in Homo sapiens (Human).